The following is a 151-amino-acid chain: Putative pre-16S rRNA nuclease (151 aa).

It belongs to the YqgF nuclease family.

The protein resides in the cytoplasm. Its function is as follows. Could be a nuclease involved in processing of the 5'-end of pre-16S rRNA. This chain is Putative pre-16S rRNA nuclease, found in Neisseria meningitidis serogroup C (strain 053442).